The following is a 79-amino-acid chain: Acyl carrier protein (79 aa).

In terms of domain architecture, Carrier spans 2-77; the sequence is SDIEARVKKI…LAIDYAKNNV (76 aa). Ser37 bears the O-(pantetheine 4'-phosphoryl)serine mark.

This sequence belongs to the acyl carrier protein (ACP) family. In terms of processing, 4'-phosphopantetheine is transferred from CoA to a specific serine of apo-ACP by AcpS. This modification is essential for activity because fatty acids are bound in thioester linkage to the sulfhydryl of the prosthetic group.

Its subcellular location is the cytoplasm. Its pathway is lipid metabolism; fatty acid biosynthesis. Its function is as follows. Carrier of the growing fatty acid chain in fatty acid biosynthesis. The polypeptide is Acyl carrier protein (Leptothrix cholodnii (strain ATCC 51168 / LMG 8142 / SP-6) (Leptothrix discophora (strain SP-6))).